A 369-amino-acid chain; its full sequence is Mannose-1-phosphate guanylyltransferase catalytic subunit beta (369 aa).

Residues Arg12 to Pro231 form a substrate-binding domain region. Asp120 contacts GDP-alpha-D-mannose. Asp120 is a Mg(2+) binding site. Residue Lys171 is part of the active site. Asp227 is a GDP-alpha-D-mannose binding site. Asp227 is a binding site for Mg(2+). The hexapeptide repeat domain stretch occupies residues Tyr254 to Met369.

It belongs to the transferase hexapeptide repeat family. Component of the GMPPA-GMPPB mannose-1-phosphate guanylyltransferase complex composed of 4 Gmppa subunits and 8 Gmppb subunits; the complex is organized into three layers, a central layer made up of 2 Gmppa dimers sandwiched between two layers each made up of 2 Gmppb dimers. Gmppb catalytic activity is reduced when part of the complex and binding of GDP-alpha-D-Mannose by Gmppa induces allosteric feedback inhibition of Gmppb. Mg(2+) is required as a cofactor.

The catalysed reaction is alpha-D-mannose 1-phosphate + GTP + H(+) = GDP-alpha-D-mannose + diphosphate. The protein operates within nucleotide-sugar biosynthesis; GDP-alpha-D-mannose biosynthesis; GDP-alpha-D-mannose from alpha-D-mannose 1-phosphate (GTP route): step 1/1. With respect to regulation, enzyme activity is reduced by incorporation into the GMPPA-GMPPB mannose-1-phosphate guanylyltransferase complex. Allosterically inhibited, when part of the GMPPA-GMPPB complex, by GDP-alpha-D-mannose binding to Gmppa. Catalytic subunit of the GMPPA-GMPPB mannose-1-phosphate guanylyltransferase complex. Catalyzes the formation of GDP-mannose, an essential precursor of glycan moieties of glycoproteins and glycolipids. Can catalyze the reverse reaction in vitro. Together with GMPPA regulates GDP-alpha-D-mannose levels. The chain is Mannose-1-phosphate guanylyltransferase catalytic subunit beta from Drosophila melanogaster (Fruit fly).